The following is a 212-amino-acid chain: Redox-sensing transcriptional repressor Rex (212 aa).

Positions 17–56 form a DNA-binding region, H-T-H motif; the sequence is LYYRIFKRFNTDGIEKASSKQIADALGIDSATVRRDFSYF. NAD(+) is bound at residue 91–96; that stretch reads GCGNIG.

This sequence belongs to the transcriptional regulatory Rex family. In terms of assembly, homodimer.

It localises to the cytoplasm. Functionally, modulates transcription in response to changes in cellular NADH/NAD(+) redox state. The sequence is that of Redox-sensing transcriptional repressor Rex from Streptococcus agalactiae serotype III (strain NEM316).